A 396-amino-acid polypeptide reads, in one-letter code: Phosphoglycerate kinase (396 aa).

Substrate-binding positions include 23–25, Arg38, 61–64, Arg122, and Arg155; these read DFN and HMGK. ATP contacts are provided by residues Lys206, Gly296, Glu327, and 353–356; that span reads GGDS.

The protein belongs to the phosphoglycerate kinase family. As to quaternary structure, monomer.

Its subcellular location is the cytoplasm. It carries out the reaction (2R)-3-phosphoglycerate + ATP = (2R)-3-phospho-glyceroyl phosphate + ADP. It functions in the pathway carbohydrate degradation; glycolysis; pyruvate from D-glyceraldehyde 3-phosphate: step 2/5. The protein is Phosphoglycerate kinase of Clostridium botulinum (strain Eklund 17B / Type B).